The primary structure comprises 364 residues: MNVFKVFCLMVLLGWQLPAMAERIKDVSMVEGVRSNQLVGYGLVVGLPGTGEQSRFTEQSFKGMLNSFGITLPASLKPKIKNVAAVAVHAELPPFRKPGQTIDITVSSIGSAGSLRGGTLLQTFLKGVDGNVYAIGQGSLIVGGLGAEGLDGSKVVINTPTVGRIPNGATVERAVKSPFMQNDYITFNLNRPDFTTAKRLEKTINDLVGPNSAQALDAASIRVIAPRDASQRVSYLSTLENLEFTPADTAAKIIVNSRTGTIVIGKNVKLQPAAITHGGLTVTIAEQLNVSQPNAFSDGDTVVTQQSIIDIKQDDSRAFVFNPGVSLDDLVRAINEVGAAPGDLMAILEALKEAGAINGQLVVI.

The signal sequence occupies residues 1–21 (MNVFKVFCLMVLLGWQLPAMA).

Belongs to the FlgI family. The basal body constitutes a major portion of the flagellar organelle and consists of four rings (L,P,S, and M) mounted on a central rod.

It is found in the periplasm. Its subcellular location is the bacterial flagellum basal body. In terms of biological role, assembles around the rod to form the L-ring and probably protects the motor/basal body from shearing forces during rotation. This chain is Flagellar P-ring protein, found in Pseudoalteromonas translucida (strain TAC 125).